Here is a 151-residue protein sequence, read N- to C-terminus: Small ribosomal subunit protein uS11 (151 aa).

The disordered stretch occupies residues 130 to 151 (EDVTPIPSDSTRRKGGRRGRRL). Residues 142–151 (RKGGRRGRRL) are compositionally biased toward basic residues.

Belongs to the universal ribosomal protein uS11 family.

In Aedes aegypti (Yellowfever mosquito), this protein is Small ribosomal subunit protein uS11.